The chain runs to 90 residues: Probable Fe(2+)-trafficking protein (90 aa).

The protein belongs to the Fe(2+)-trafficking protein family. Monomer.

Could be a mediator in iron transactions between iron acquisition and iron-requiring processes, such as synthesis and/or repair of Fe-S clusters in biosynthetic enzymes. This chain is Probable Fe(2+)-trafficking protein, found in Proteus mirabilis (strain HI4320).